The chain runs to 635 residues: Threonine--tRNA ligase (635 aa).

The region spanning 1–61 is the TGS domain; it reads MIKITLKDGK…HKDSSLEILT (61 aa). The interval 242-532 is catalytic; that stretch reads DHRKLGKELD…LIEQYAGAFP (291 aa). The Zn(2+) site is built by Cys333, His384, and His509.

Belongs to the class-II aminoacyl-tRNA synthetase family. In terms of assembly, homodimer. Zn(2+) serves as cofactor.

The protein resides in the cytoplasm. It carries out the reaction tRNA(Thr) + L-threonine + ATP = L-threonyl-tRNA(Thr) + AMP + diphosphate + H(+). Functionally, catalyzes the attachment of threonine to tRNA(Thr) in a two-step reaction: L-threonine is first activated by ATP to form Thr-AMP and then transferred to the acceptor end of tRNA(Thr). Also edits incorrectly charged L-seryl-tRNA(Thr). The sequence is that of Threonine--tRNA ligase from Clostridium botulinum (strain Okra / Type B1).